The sequence spans 359 residues: UDP-N-acetylglucosamine--N-acetylmuramyl-(pentapeptide) pyrophosphoryl-undecaprenol N-acetylglucosamine transferase (359 aa).

UDP-N-acetyl-alpha-D-glucosamine-binding positions include 15 to 17, N127, R166, S191, I245, 264 to 269, and Q290; these read TGG and ALTVSE.

This sequence belongs to the glycosyltransferase 28 family. MurG subfamily.

The protein localises to the cell inner membrane. The enzyme catalyses di-trans,octa-cis-undecaprenyl diphospho-N-acetyl-alpha-D-muramoyl-L-alanyl-D-glutamyl-meso-2,6-diaminopimeloyl-D-alanyl-D-alanine + UDP-N-acetyl-alpha-D-glucosamine = di-trans,octa-cis-undecaprenyl diphospho-[N-acetyl-alpha-D-glucosaminyl-(1-&gt;4)]-N-acetyl-alpha-D-muramoyl-L-alanyl-D-glutamyl-meso-2,6-diaminopimeloyl-D-alanyl-D-alanine + UDP + H(+). Its pathway is cell wall biogenesis; peptidoglycan biosynthesis. In terms of biological role, cell wall formation. Catalyzes the transfer of a GlcNAc subunit on undecaprenyl-pyrophosphoryl-MurNAc-pentapeptide (lipid intermediate I) to form undecaprenyl-pyrophosphoryl-MurNAc-(pentapeptide)GlcNAc (lipid intermediate II). The polypeptide is UDP-N-acetylglucosamine--N-acetylmuramyl-(pentapeptide) pyrophosphoryl-undecaprenol N-acetylglucosamine transferase (Pseudomonas putida (strain GB-1)).